The chain runs to 400 residues: Argininosuccinate synthase (400 aa).

Residues 11-19 and alanine 38 each bind ATP; that span reads AYSGGLDTS. Residues tyrosine 89 and serine 94 each coordinate L-citrulline. Residue glycine 119 coordinates ATP. Threonine 121, asparagine 125, and aspartate 126 together coordinate L-aspartate. Residue asparagine 125 participates in L-citrulline binding. Positions 129, 179, 188, 264, and 276 each coordinate L-citrulline.

Belongs to the argininosuccinate synthase family. Type 1 subfamily. In terms of assembly, homotetramer.

The protein localises to the cytoplasm. The catalysed reaction is L-citrulline + L-aspartate + ATP = 2-(N(omega)-L-arginino)succinate + AMP + diphosphate + H(+). The protein operates within amino-acid biosynthesis; L-arginine biosynthesis; L-arginine from L-ornithine and carbamoyl phosphate: step 2/3. This Oleidesulfovibrio alaskensis (strain ATCC BAA-1058 / DSM 17464 / G20) (Desulfovibrio alaskensis) protein is Argininosuccinate synthase.